A 482-amino-acid chain; its full sequence is PAN domain-containing protein At5g03700 (482 aa).

The signal sequence occupies residues 1 to 31 (MEGLCLNSFTRVLLLLFVFLVFSHKWQRVNA). Residues 330–411 (CDKTTEFKVV…SKLGYFKVRE (82 aa)) enclose the PAN domain. 2 cysteine pairs are disulfide-bonded: C363–C385 and C367–C373. A helical membrane pass occupies residues 425–445 (GMSLLAVIALVLMVAMVYVGF).

It localises to the membrane. The sequence is that of PAN domain-containing protein At5g03700 from Arabidopsis thaliana (Mouse-ear cress).